The primary structure comprises 218 residues: Octanoyltransferase (218 aa).

Residues 31 to 207 (AQTPDELWLL…QLAAQLGYAE (177 aa)) form the BPL/LPL catalytic domain. Substrate-binding positions include 70 to 77 (RGGQVTYH), 137 to 139 (SLG), and 150 to 152 (GLA). Residue C168 is the Acyl-thioester intermediate of the active site.

Belongs to the LipB family.

Its subcellular location is the cytoplasm. The catalysed reaction is octanoyl-[ACP] + L-lysyl-[protein] = N(6)-octanoyl-L-lysyl-[protein] + holo-[ACP] + H(+). It functions in the pathway protein modification; protein lipoylation via endogenous pathway; protein N(6)-(lipoyl)lysine from octanoyl-[acyl-carrier-protein]: step 1/2. Catalyzes the transfer of endogenously produced octanoic acid from octanoyl-acyl-carrier-protein onto the lipoyl domains of lipoate-dependent enzymes. Lipoyl-ACP can also act as a substrate although octanoyl-ACP is likely to be the physiological substrate. The chain is Octanoyltransferase from Azotobacter vinelandii (strain DJ / ATCC BAA-1303).